A 447-amino-acid chain; its full sequence is Secretin receptor (447 aa).

A signal peptide spans 1-28 (MLSTMSPRLSLLLLWLLLLINAAHPVGA). Topologically, residues 29 to 140 (LPRLCDVRRV…NERRHAYLLK (112 aa)) are extracellular. 3 disulfide bridges follow: Cys46/Cys74, Cys65/Cys106, and Cys88/Cys122. 4 N-linked (GlcNAc...) asparagine glycosylation sites follow: Asn71, Asn99, Asn105, and Asn127. A helical membrane pass occupies residues 141–166 (LKVMYTVGYSSSLAMLLVALSILCSF). At 167–173 (RRLHCTR) the chain is on the cytoplasmic side. A helical membrane pass occupies residues 174–194 (NYIHMHLFVSFILRALSNFIK). Residues 195 to 215 (DAVLFPADDVTYCDAHRAGCK) are Extracellular-facing. Cys214 and Cys284 are joined by a disulfide. Residues 216–238 (LVMIFFQYCIMANYAWLLVEGLY) traverse the membrane as a helical segment. The Cytoplasmic segment spans residues 239-253 (LHTLLAISFFSERKC). Residues 254–275 (LQAFVLFGWGSPAIFVALWAVT) form a helical membrane-spanning segment. Residues 276–290 (RHFLEDFGCWDINSN) lie on the Extracellular side of the membrane. The N-linked (GlcNAc...) asparagine glycan is linked to Asn290. A helical membrane pass occupies residues 291–314 (ASIWWVIRGPVILSIVINFIFFIN). Residues 315 to 339 (ILRILMRKLRTQETRGNETHHYKRL) are Cytoplasmic-facing. A helical transmembrane segment spans residues 340–355 (AKSTLLLIPLFGIHYI). Topologically, residues 356–366 (VFAFSPEGAME) are extracellular. Residues 367–390 (VQLFFELALGSFQGLVVAVLYCFL) traverse the membrane as a helical segment. Residues 391 to 447 (NGELEVQKKWRQWHLQEFPLRPVALSNSFSNATNGPTHSTKAGTSEQSRSIPGANVI) lie on the Cytoplasmic side of the membrane. Residues 423–440 (TNGPTHSTKAGTSEQSRS) are compositionally biased toward polar residues. The tract at residues 423 to 447 (TNGPTHSTKAGTSEQSRSIPGANVI) is disordered.

The protein belongs to the G-protein coupled receptor 2 family. In terms of processing, phosphorylated on Ser and Thr residues at the cytoplasmic C-terminus by G protein-coupled receptor kinases (GRKs). In brain, expressed in the hippocampal CA1 region, the lower layer of cerebral cortex, the anterior olfactory nuclei, the anterior ventrolateral thalamus, the lateral region of hypothalamus, substantia nigra, tegmental area and central nucleus of the inferior colliculus, the ventral supramamillary nucleus and the cerebellum. Expressed in brown adipocytes: expression predominates in mature brown adipocytes (at protein level). Detected in the renal medulla, where it localized predominantly on the basolateral membranes of cells in the collecting ducts (blue arrow) and the ascending thick segments of the loop of Henle.

Its subcellular location is the cell membrane. It localises to the basolateral cell membrane. Functionally, g protein-coupled receptor activated by secretin (SCT), which is involved in different processes such as regulation of the pH of the duodenal content, food intake and water homeostasis. Ligand binding causes a conformation change that triggers signaling via guanine nucleotide-binding proteins (G proteins) and activates cAMP-dependent pathway. Upon binding to secretin, regulates the pH of the duodenum by (1) inhibiting the secretion of gastric acid from the parietal cells of the stomach and (2) stimulating the production of bicarbonate (NaHCO(3)) from the ductal cells of the pancreas. In addition to regulating the pH of the duodenal content, plays a central role in diet induced thermogenesis: acts as a non-sympathetic brown fat (BAT) activator mediating prandial thermogenesis, which consequentially induces satiation. Mechanistically, secretin released by the gut after a meal binds to secretin receptor (SCTR) in brown adipocytes, activating brown fat thermogenesis by stimulating lipolysis, which is sensed in the brain and promotes satiation. Also able to stimulate lipolysis in white adipocytes. Also plays an important role in cellular osmoregulation by regulating renal water reabsorption. Also plays a role in the central nervous system: required for synaptic plasticity. The protein is Secretin receptor of Mus musculus (Mouse).